The following is a 313-amino-acid chain: MMENFKHTTVLLDEAVNGLNIRPDGIYIDGTFGRGGHSRLILSQLGEEGRLLAIDRDPQAIAVAQAINDPRFSIIHGPFSALADYVAERELTGKIDGILLDLGVSSPQLDDAERGFSFMRDGPLDMRMDPTRGQSAAEWLQTAEEADIAWVLKTFGEERFAKRIARAIVERNREQPMTRTKELAEVVAAATPVKDKFKHPATRTFQAVRIWVNSELEEIEQALKSSLSVLAPGGRLSIISFHSLEDRIVKRFMREQSRGPQVPAGLPMTEAQLKKLGGRELRALGKLMPGEKEVAENPRARSSVLRIAERTNA.

Residues 35–37, Asp55, Phe79, Asp101, and Gln108 contribute to the S-adenosyl-L-methionine site; that span reads GGH.

Belongs to the methyltransferase superfamily. RsmH family.

It is found in the cytoplasm. The catalysed reaction is cytidine(1402) in 16S rRNA + S-adenosyl-L-methionine = N(4)-methylcytidine(1402) in 16S rRNA + S-adenosyl-L-homocysteine + H(+). Functionally, specifically methylates the N4 position of cytidine in position 1402 (C1402) of 16S rRNA. In Salmonella newport (strain SL254), this protein is Ribosomal RNA small subunit methyltransferase H.